The primary structure comprises 142 residues: HTH-type transcriptional regulator MntR (142 aa).

Residues 1-63 (MPTPSMEDYI…YEKYRGLVLT (63 aa)) form the HTH dtxR-type domain. Residues Asp-8, Glu-11, His-77, Glu-99, Glu-102, and His-103 each coordinate Mn(2+).

It belongs to the DtxR/MntR family. Homodimer.

The protein resides in the cytoplasm. DNA binding is strongly activated by Mn(2+). Functionally, central regulator of manganese homeostasis. The chain is HTH-type transcriptional regulator MntR from Bacillus cereus (strain AH820).